A 315-amino-acid polypeptide reads, in one-letter code: Homoserine kinase (315 aa).

97–107 (PPARGLGSSAT) lines the ATP pocket.

This sequence belongs to the GHMP kinase family. Homoserine kinase subfamily.

The protein resides in the cytoplasm. The enzyme catalyses L-homoserine + ATP = O-phospho-L-homoserine + ADP + H(+). It functions in the pathway amino-acid biosynthesis; L-threonine biosynthesis; L-threonine from L-aspartate: step 4/5. In terms of biological role, catalyzes the ATP-dependent phosphorylation of L-homoserine to L-homoserine phosphate. The polypeptide is Homoserine kinase (Prochlorococcus marinus (strain MIT 9301)).